The primary structure comprises 478 residues: Sorting nexin-4 (478 aa).

Basic and acidic residues predominate over residues 1-10 (MAVIDQHQDD). The tract at residues 1 to 56 (MAVIDQHQDDFSNVSWNTDEHTAAESSSSVTATEFDDTERNGHNAYESDAPGSDGQ) is disordered. The span at 24 to 33 (AESSSSVTAT) shows a compositional bias: low complexity. Residues 58-180 (VLDCVVSEPL…IFLESPDWNA (123 aa)) form the PX domain. A 1,2-diacyl-sn-glycero-3-phospho-(1D-myo-inositol-3-phosphate) contacts are provided by Arg-101, Thr-103, Lys-127, and Arg-146. The segment at 459–478 (EGVSGTRSTGVEPPGRRLAD) is disordered.

This sequence belongs to the sorting nexin family. Interacts with the mitochondrial prohibitin complex subunits PHB1 and PHB2; the interaction is direct and plays a role in mitophagy.

It localises to the cytoplasm. Its subcellular location is the cytosol. The protein resides in the preautophagosomal structure membrane. It is found in the endosome membrane. The protein localises to the mitochondrion membrane. It localises to the lipid droplet. In terms of biological role, sorting nexin, involved in the separation or division of vacuoles throughout the entire life cycle of the cells. Involved in retrieval of late-Golgi SNAREs from post-Golgi endosomes to the trans-Golgi network, for cytoplasm to vacuole transport (Cvt), and autophagy of large cargos including mitophagy, pexophagy and glycophagy. Required for the switch to necrotrophic growth. In Colletotrichum higginsianum (strain IMI 349063) (Crucifer anthracnose fungus), this protein is Sorting nexin-4.